The following is a 450-amino-acid chain: Phosphoglucosamine mutase (450 aa).

Ser-101 (phosphoserine intermediate) is an active-site residue. Residues Ser-101, Asp-240, Asp-242, and Asp-244 each contribute to the Mg(2+) site. Ser-101 carries the phosphoserine modification.

The protein belongs to the phosphohexose mutase family. The cofactor is Mg(2+). In terms of processing, activated by phosphorylation.

It catalyses the reaction alpha-D-glucosamine 1-phosphate = D-glucosamine 6-phosphate. Its function is as follows. Catalyzes the conversion of glucosamine-6-phosphate to glucosamine-1-phosphate. The sequence is that of Phosphoglucosamine mutase from Streptococcus gordonii (strain Challis / ATCC 35105 / BCRC 15272 / CH1 / DL1 / V288).